Reading from the N-terminus, the 55-residue chain is uncharacterized protein (55 aa).

This is an uncharacterized protein from Clostridium perfringens.